Consider the following 182-residue polypeptide: A-type ATP synthase subunit E (182 aa).

The protein belongs to the V-ATPase E subunit family. As to quaternary structure, has multiple subunits with at least A(3), B(3), C, D, E, F, H, I and proteolipid K(x).

The protein resides in the cell membrane. Component of the A-type ATP synthase that produces ATP from ADP in the presence of a proton gradient across the membrane. This chain is A-type ATP synthase subunit E, found in Methanothrix thermoacetophila (strain DSM 6194 / JCM 14653 / NBRC 101360 / PT) (Methanosaeta thermophila).